The following is a 2220-amino-acid chain: Non-reducing polyketide synthase stbA (2220 aa).

Residues 10 to 255 form an N-terminal acylcarrier protein transacylase domain (SAT) region; sequence IFSPQNSPPK…HDATNTDMAQ (246 aa). Positions 379–803 constitute a Ketosynthase family 3 (KS3) domain; the sequence is SDAIAVVGAG…GSNSALICSE (425 aa). Catalysis depends on for beta-ketoacyl synthase activity residues C551, H687, and H726. A malonyl-CoA:ACP transacylase (MAT) domain region spans residues 906–1207; that stretch reads LAFSGQSRTN…ADATQHTFQA (302 aa). S993 serves as the catalytic For acyl/malonyl transferase activity. The segment at 1287–1414 is N-terminal hotdog fold; sequence EPRAAQLVRY…GDFTMTAGPH (128 aa). One can recognise a PKS/mFAS DH domain in the interval 1287-1589; that stretch reads EPRAAQLVRY…FHKTSMTKLL (303 aa). Residues 1292-1588 form a product template (PT) domain region; it reads QLVRYKGALG…HFHKTSMTKL (297 aa). The Proton acceptor; for dehydratase activity role is filled by H1323. Positions 1436–1589 are C-terminal hotdog fold; the sequence is DAEKLRKRTA…FHKTSMTKLL (154 aa). D1500 (proton donor; for dehydratase activity) is an active-site residue. Carrier domains lie at 1634-1711 and 1742-1821; these read AAGP…SGGA and PAGP…AADV. Residues S1671 and S1779 each carry the O-(pantetheine 4'-phosphoryl)serine modification. The interval 1879–2210 is thioesterase (TE) domain; that stretch reads TRFRMETVVY…YDFIFTELEN (332 aa). Residues S1999 and D2148 each act as for thioesterase activity in the active site.

The enzyme catalyses 3 malonyl-CoA + acetyl-CoA + 2 H(+) = orsellinate + 3 CO2 + 4 CoA. The protein operates within secondary metabolite biosynthesis; terpenoid biosynthesis. In terms of biological role, non-reducing polyketide synthase; part of the cluster that mediates the biosynthesis of LL-Z1272-beta, also known as ilicicolin B, a prenylated aryl-aldehyde produced by several fungi and that serves as a key pathway intermediate for many fungal meroterpenoids. The first step in the pathway is performed by the non-reducing polyketide synthase stbA that produces orsellinic acid by condensing acetyl-CoA with 3 malonyl-CoA units. The prenyltransferase stbC then prenylates orsenilic acid into grifolic acid. Finally, grifolic acid is reduced to ilicicolin B by the NRPS-like protein stbB. In Stachybotrys bisbyi (Hyalostachybotrys bisbyi), this protein is Non-reducing polyketide synthase stbA.